Reading from the N-terminus, the 528-residue chain is Transcription factor cghF (528 aa).

A disordered region spans residues 232–283 (TPPNHATSSTPTSTRTPPTYHPHGPRPKSPLSSTPSPRTESTKSAAPSRDLA). Over residues 238–249 (TSSTPTSTRTPP) the composition is skewed to low complexity. The span at 261–276 (PLSSTPSPRTESTKSA) shows a compositional bias: polar residues.

The protein localises to the nucleus. In terms of biological role, transcription factor that regulates the expression of the gene cluster that mediates the biosynthesis of the tetramic acid Sch210972, a potential anti-HIV fungal natural product that contains a decalin core. The polypeptide is Transcription factor cghF (Chaetomium globosum (strain ATCC 6205 / CBS 148.51 / DSM 1962 / NBRC 6347 / NRRL 1970) (Soil fungus)).